The chain runs to 256 residues: Ribonuclease HII (256 aa).

Positions 72–256 (ALICGIDEVG…SFEPIKSMMK (185 aa)) constitute an RNase H type-2 domain. A divalent metal cation is bound by residues Asp-78, Glu-79, and Asp-170.

The protein belongs to the RNase HII family. The cofactor is Mn(2+). Mg(2+) serves as cofactor.

It is found in the cytoplasm. The catalysed reaction is Endonucleolytic cleavage to 5'-phosphomonoester.. Its function is as follows. Endonuclease that specifically degrades the RNA of RNA-DNA hybrids. This chain is Ribonuclease HII, found in Staphylococcus epidermidis (strain ATCC 12228 / FDA PCI 1200).